A 141-amino-acid polypeptide reads, in one-letter code: Galactose-6-phosphate isomerase subunit LacA (141 aa).

The protein belongs to the LacAB/RpiB family. In terms of assembly, heteromultimeric protein consisting of LacA and LacB.

The enzyme catalyses aldehydo-D-galactose 6-phosphate = keto-D-tagatose 6-phosphate. It functions in the pathway carbohydrate metabolism; D-galactose 6-phosphate degradation; D-tagatose 6-phosphate from D-galactose 6-phosphate: step 1/1. This chain is Galactose-6-phosphate isomerase subunit LacA, found in Streptococcus equi subsp. zooepidemicus (strain MGCS10565).